A 231-amino-acid polypeptide reads, in one-letter code: Two-component response regulator ARR3 (231 aa).

A Response regulatory domain is found at histidine 34–threonine 161. Aspartate 94 carries the 4-aspartylphosphate modification. The tract at residues glycine 170–alanine 231 is disordered. The span at serine 185–serine 199 shows a compositional bias: low complexity. Over residues leucine 210–valine 221 the composition is skewed to polar residues.

The protein belongs to the ARR family. Type-A subfamily. Two-component system major event consists of a His-to-Asp phosphorelay between a sensor histidine kinase (HK) and a response regulator (RR). In plants, the His-to-Asp phosphorelay involves an additional intermediate named Histidine-containing phosphotransfer protein (HPt). This multistep phosphorelay consists of a His-Asp-His-Asp sequential transfer of a phosphate group between first a His and an Asp of the HK protein, followed by the transfer to a conserved His of the HPt protein and finally the transfer to an Asp in the receiver domain of the RR protein. Predominantly expressed in roots.

It is found in the nucleus. In terms of biological role, functions as a response regulator involved in His-to-Asp phosphorelay signal transduction system. Phosphorylation of the Asp residue in the receiver domain activates the ability of the protein to promote the transcription of target genes. Type-A response regulators seem to act as negative regulators of the cytokinin signaling. This is Two-component response regulator ARR3 (ARR3) from Arabidopsis thaliana (Mouse-ear cress).